A 186-amino-acid chain; its full sequence is Membrane protein Rv1476 (186 aa).

A helical membrane pass occupies residues 138-158; that stretch reads FPWSALTIVLLIGVLAAAVGA. The segment at 166–186 is disordered; it reads RRSATSTDAAPGAGDDLNQGV.

It is found in the membrane. Its function is as follows. May affect the expression of genes linked to host macrophage apoptosis and immune response, thereby promoting the survival of M.tuberculosis in host macrophages. Overexpression of the gene increases susceptibility of the bacteria to various stresses, but promotes intracellular survival in host macrophages. It has no impact on the growth rate in vitro. Overexpression causes changes in the transcriptome of THP-1 cells, including expression of genes involved in cell proliferation, fatty acid degradation, cytokine-cytokine receptor interaction and immune response pathways. In Mycobacterium tuberculosis (strain ATCC 25618 / H37Rv), this protein is Membrane protein Rv1476.